A 351-amino-acid polypeptide reads, in one-letter code: Uroporphyrinogen decarboxylase (351 aa).

Residues 26–30 (RQAGR), Phe45, Asp76, Tyr153, Ser208, and His323 each bind substrate.

It belongs to the uroporphyrinogen decarboxylase family. Homodimer.

Its subcellular location is the cytoplasm. The enzyme catalyses uroporphyrinogen III + 4 H(+) = coproporphyrinogen III + 4 CO2. It participates in porphyrin-containing compound metabolism; protoporphyrin-IX biosynthesis; coproporphyrinogen-III from 5-aminolevulinate: step 4/4. Catalyzes the decarboxylation of four acetate groups of uroporphyrinogen-III to yield coproporphyrinogen-III. In Prochlorococcus marinus (strain SARG / CCMP1375 / SS120), this protein is Uroporphyrinogen decarboxylase.